The sequence spans 138 residues: Large ribosomal subunit protein uL16 (138 aa).

A compositionally biased stretch (basic residues) spans 1–21; that stretch reads MLIPRKVKHRKQHHPSLRGRA. The disordered stretch occupies residues 1–22; that stretch reads MLIPRKVKHRKQHHPSLRGRAK.

It belongs to the universal ribosomal protein uL16 family. In terms of assembly, part of the 50S ribosomal subunit.

Functionally, binds 23S rRNA and is also seen to make contacts with the A and possibly P site tRNAs. The protein is Large ribosomal subunit protein uL16 of Thermobifida fusca (strain YX).